We begin with the raw amino-acid sequence, 194 residues long: MRLCDTDIEKHLDEGIITISPRPDNGKINGATIDLRLGNSFRVFREHSAPYIDVSGPKEAVAEQLERVMSDEIIVADNEAFFLHPGVLALATTLESVKLPADIIGWLDGRSSLARLGLMVHVTAHRIDPGWEGKIVLEFYNSGKLPLALRPNMIIGALSFEVLSGPAARPYNSRQDAKYKNQQSAVASRINQDR.

DCTP-binding positions include arginine 110 to arginine 115, aspartate 128, valine 136 to glutamate 138, tyrosine 171, lysine 178, and glutamine 182. The Proton donor/acceptor role is filled by glutamate 138. Residues serine 173–arginine 194 are disordered. A compositionally biased stretch (polar residues) spans lysine 180–arginine 194.

Belongs to the dCTP deaminase family. As to quaternary structure, homotrimer.

The catalysed reaction is dCTP + H2O + H(+) = dUTP + NH4(+). It participates in pyrimidine metabolism; dUMP biosynthesis; dUMP from dCTP (dUTP route): step 1/2. Catalyzes the deamination of dCTP to dUTP. This chain is dCTP deaminase, found in Actinobacillus succinogenes (strain ATCC 55618 / DSM 22257 / CCUG 43843 / 130Z).